Consider the following 3814-residue polypeptide: Hybrid PKS-NRPS synthetase pyvA (3814 aa).

The Ketosynthase family 3 (KS3) domain maps to 1 to 340 (MDPQQRLLLE…GSNAHVILES (340 aa)). Residues C87, H222, and H261 each act as for beta-ketoacyl synthase activity in the active site. The segment at 441 to 758 (VFTGQGAQWH…PYFASLSRGV (318 aa)) is malonyl-CoA:ACP transacylase (MAT) domain. S533 (for malonyltransferase activity) is an active-site residue. Positions 835–970 (HPILGAKMPG…GLISISTATT (136 aa)) are N-terminal hotdog fold. Residues 835 to 1149 (HPILGAKMPG…LRLTSLSNGR (315 aa)) are dehydratase (DH) domain. The PKS/mFAS DH domain occupies 835–1151 (HPILGAKMPG…LTSLSNGRAA (317 aa)). Residue H867 is the Proton acceptor; for dehydratase activity of the active site. The segment at 970–993 (TADGAPSRKPYRQHPQPQPGRMST) is disordered. The tract at residues 991–1151 (MSTASFPAQS…LTSLSNGRAA (161 aa)) is C-terminal hotdog fold. D1057 acts as the Proton donor; for dehydratase activity in catalysis. Residues 1520–1836 (GLLETLVWED…MGRHTGKVVL (317 aa)) are enoyl reductase (ER) domain. Residues 1864-2036 (TYLLVGGLGG…PASSMNCGRI (173 aa)) are ketoreductase (KR) domain. Positions 2141-2220 (IDLSDRVALL…ALVEKAIGLF (80 aa)) constitute a Carrier 1 domain. An O-(pantetheine 4'-phosphoryl)serine modification is found at S2180. The span at 2228–2238 (QQQQQSVQSSS) shows a compositional bias: low complexity. Residues 2228–2270 (QQQQQSVQSSSAPSNDDQSPTFNKNLDSQDPSTSLQIPKADCS) form a disordered region. The segment covering 2239–2263 (APSNDDQSPTFNKNLDSQDPSTSLQ) has biased composition (polar residues). The segment at 2273-2718 (LPMSTFQNRL…PEVRLAGTLE (446 aa)) is condensation (C) domain 7. The interval 2738-3149 (PLNLPRRIVE…DGQLEFLGRI (412 aa)) is adenylation (A) domain 8. Positions 3257 to 3304 (SGKTDRRALGASQAPGTPPQHGAGPAAASTLDPAQAQAQDRADEEVGD) are disordered. In terms of domain architecture, Carrier 2 spans 3304 to 3379 (DRTMATVTRV…QLVELVHSKV (76 aa)). O-(pantetheine 4'-phosphoryl)serine is present on S3339. Residues 3428–3680 (MTGAESFTGI…VDLVPVNYLT (253 aa)) are thioesterase (TE) domain.

The protein in the C-terminal section; belongs to the NRP synthetase family.

It participates in secondary metabolite biosynthesis. Functionally, hybrid PKS-NRPS synthetase; part of the gene cluster that mediates the biosynthesis of pyranoviolin A, a pyranonigrin analog with a C-3 methoxy group. Initially, the PKS portion of pyvA synthesizes C-10 carbon chain from 5 molecules of malonyl-CoA, which is then condensed with the thiolation (T) domain-bound glycine activated by the adenylation (A) domain. The subsequent chain release by Dieckmann condensation (DKC) could be catalyzed by the TE domain present at the C-terminus of pyvA and/or the alpha/beta hydrolase pyvD, installing the tetramic acid moiety. The FAD-dependent monooxygenase pyvC next epoxidizes one of the olefins of the polyketide part, and the epoxide ring-opening induces the dihydro-gamma-pyrone ring formation. The cytochrome P450 monooxygeanse pyvB would be responsible for the 2 consecutive reactions, in which the dihydro-gamma-pyrone is oxidized to gamma-pyrone and C-7 is hydroxylated to yield pyranonigrin F. Finally, the O-methyltransferase pyvH methylates the C-3 hydroxy group to complete the biosynthesis. The sequence is that of Hybrid PKS-NRPS synthetase pyvA from Aspergillus violaceofuscus (strain CBS 115571).